A 215-amino-acid polypeptide reads, in one-letter code: Small ribosomal subunit protein uS2 (215 aa).

Belongs to the universal ribosomal protein uS2 family.

This chain is Small ribosomal subunit protein uS2, found in Caldivirga maquilingensis (strain ATCC 700844 / DSM 13496 / JCM 10307 / IC-167).